A 431-amino-acid chain; its full sequence is MESKFKQLSDTEQELEISFSPDEFQPELDKQYKLAQAKAHLKGFRKGKAPLQMIKKMLGRDIQYQVVEELAGKNFESVAKENDLKLVGQAKIRHYELAENEKLSIYLIYEVHPAFELKPFNEYEFKKAEYQVSDETVEKELKKLLQSKGNMVAVEGAAAPTDIVIGDVQKLDADGTAIVGERQENQSFRLEYMKDDSPFFTALNGVNKGEERRVEVEVKEEDVPEENKKQTFLISVKEIKRMELPELTDELVKELSRGKNETVQDFRDELRKQIEAYFTNKSEEDLMESVAQKFLEENVFTAPSSLIKMYEDMLLDNAKRQIGGAFPPGFDETYYRAEIRPNAEKHARWMLIRNKIAELNGIEVSDDDIKALAEKEAKLTGAEATEEFVNTYFSEQYKPYVIDTLLRDKIYEFIKANTKIEVESKLPEAAV.

The region spanning 161–245 is the PPIase FKBP-type domain; the sequence is TDIVIGDVQK…VKEIKRMELP (85 aa).

This sequence belongs to the FKBP-type PPIase family. Tig subfamily.

It is found in the cytoplasm. It carries out the reaction [protein]-peptidylproline (omega=180) = [protein]-peptidylproline (omega=0). In terms of biological role, involved in protein export. Acts as a chaperone by maintaining the newly synthesized protein in an open conformation. Functions as a peptidyl-prolyl cis-trans isomerase. This Chloroherpeton thalassium (strain ATCC 35110 / GB-78) protein is Trigger factor.